The chain runs to 442 residues: U11/U12 small nuclear ribonucleoprotein 65 kDa protein (442 aa).

Positions 28–102 constitute an RRM 1 domain; that stretch reads VTLLVRHLPD…KVLQVQRANK (75 aa). 3 disordered regions span residues 101–138, 200–242, and 290–317; these read NKPN…QILS, LALP…GRKR, and SKVT…DSNL. Residues 102–116 show a composition bias toward basic and acidic residues; that stretch reads KPNDNKKSRQIEESV. Residues 117–136 show a composition bias toward polar residues; it reads TKGNAFSTVSTNNDSKSGQI. Residues 200 to 209 are compositionally biased toward pro residues; sequence LALPTPPLPK. The span at 297-307 shows a compositional bias: acidic residues; it reads YKEESENEDPA. Positions 352 to 434 constitute an RRM 2 domain; it reads VVLYIKNLAK…KPMIIQFGRT (83 aa).

As to quaternary structure, component of the U11/U12 snRNPs that are part of the U12-type spliceosome. Forms a complex with U12 snRNA. In terms of tissue distribution, ubiquitous.

The protein localises to the nucleus. In terms of biological role, component of minor spliceosome required for U12-type intron splicing and alternative splicing of many introns. Binds specifically to U12 snRNA, which is necessary for branch-point site recognition. Required for normal plant development. The polypeptide is U11/U12 small nuclear ribonucleoprotein 65 kDa protein (SNRNP65) (Arabidopsis thaliana (Mouse-ear cress)).